Reading from the N-terminus, the 372-residue chain is Alanine dehydrogenase 1 (372 aa).

His94 is a catalytic residue. NAD(+) is bound at residue 170-200; the sequence is TYVIFGGGVAATNAANVALGLNAKVIIIELN.

The protein belongs to the AlaDH/PNT family.

It catalyses the reaction L-alanine + NAD(+) + H2O = pyruvate + NH4(+) + NADH + H(+). The protein operates within amino-acid degradation; L-alanine degradation via dehydrogenase pathway; NH(3) and pyruvate from L-alanine: step 1/1. In terms of biological role, may play a role in cell wall synthesis as L-alanine is an important constituent of the peptidoglycan layer. In Staphylococcus aureus (strain MSSA476), this protein is Alanine dehydrogenase 1 (ald1).